The following is a 255-amino-acid chain: uncharacterized protein (255 aa).

The HTH deoR-type domain occupies 4–59; the sequence is RNERLNLIRKRVDQYGQVAVKDLAIFLQVTPETVRKDLETLENDKLITRTHGGAIQ. Positions 21 to 40 form a DNA-binding region, H-T-H motif; it reads VAVKDLAIFLQVTPETVRKD.

This is an uncharacterized protein from Staphylococcus epidermidis (strain ATCC 12228 / FDA PCI 1200).